The chain runs to 225 residues: UPF0758 protein AZOSEA04420 (225 aa).

In terms of domain architecture, MPN spans 102 to 225 (VFESPLAVRN…PLSFAERGLL (124 aa)). His173, His175, and Asp186 together coordinate Zn(2+). Residues 173 to 186 (HNHPSGAAEPSPAD) carry the JAMM motif motif.

The protein belongs to the UPF0758 family.

This chain is UPF0758 protein AZOSEA04420, found in Aromatoleum aromaticum (strain DSM 19018 / LMG 30748 / EbN1) (Azoarcus sp. (strain EbN1)).